The primary structure comprises 267 residues: 4-hydroxy-tetrahydrodipicolinate reductase (267 aa).

An NAD(+)-binding site is contributed by 8–13; the sequence is GANGRM. Arg35 is a binding site for NADP(+). Residues 98–100 and 122–125 each bind NAD(+); these read GTT and AANY. His155 acts as the Proton donor/acceptor in catalysis. (S)-2,3,4,5-tetrahydrodipicolinate is bound at residue His156. The active-site Proton donor is the Lys159. Residue 165–166 participates in (S)-2,3,4,5-tetrahydrodipicolinate binding; that stretch reads GT.

This sequence belongs to the DapB family.

The protein resides in the cytoplasm. It catalyses the reaction (S)-2,3,4,5-tetrahydrodipicolinate + NAD(+) + H2O = (2S,4S)-4-hydroxy-2,3,4,5-tetrahydrodipicolinate + NADH + H(+). The enzyme catalyses (S)-2,3,4,5-tetrahydrodipicolinate + NADP(+) + H2O = (2S,4S)-4-hydroxy-2,3,4,5-tetrahydrodipicolinate + NADPH + H(+). It functions in the pathway amino-acid biosynthesis; L-lysine biosynthesis via DAP pathway; (S)-tetrahydrodipicolinate from L-aspartate: step 4/4. Catalyzes the conversion of 4-hydroxy-tetrahydrodipicolinate (HTPA) to tetrahydrodipicolinate. The polypeptide is 4-hydroxy-tetrahydrodipicolinate reductase (Pseudoalteromonas atlantica (strain T6c / ATCC BAA-1087)).